The sequence spans 834 residues: Periplasmic nitrate reductase (834 aa).

Positions 1-29 (MNLTRREFAKANAAAIAAAAAGLPILVRA) form a signal peptide, tat-type signal. In terms of domain architecture, 4Fe-4S Mo/W bis-MGD-type spans 41–97 (LVWNKAPCRFCGTGCSVMVATRDGQVVATHGDIKAEVNRGINCVKGYFLSKIMYGSD). Residues cysteine 48, cysteine 51, cysteine 55, and cysteine 83 each contribute to the [4Fe-4S] cluster site. Mo-bis(molybdopterin guanine dinucleotide) is bound by residues lysine 85, glutamine 152, asparagine 177, cysteine 181, 214–221 (WGSNMAEM), 245–249 (STFEH), 264–266 (QTD), methionine 375, glutamine 379, asparagine 485, 511–512 (SD), lysine 534, aspartate 561, and 721–730 (TGRVLEHWHT). Phenylalanine 797 is a substrate binding site. Mo-bis(molybdopterin guanine dinucleotide)-binding residues include asparagine 805 and lysine 822.

It belongs to the prokaryotic molybdopterin-containing oxidoreductase family. NasA/NapA/NarB subfamily. Component of the periplasmic nitrate reductase NapAB complex composed of NapA and NapB. The cofactor is [4Fe-4S] cluster. Mo-bis(molybdopterin guanine dinucleotide) serves as cofactor. In terms of processing, predicted to be exported by the Tat system. The position of the signal peptide cleavage has not been experimentally proven.

Its subcellular location is the periplasm. It carries out the reaction 2 Fe(II)-[cytochrome] + nitrate + 2 H(+) = 2 Fe(III)-[cytochrome] + nitrite + H2O. Functionally, catalytic subunit of the periplasmic nitrate reductase complex NapAB. Receives electrons from NapB and catalyzes the reduction of nitrate to nitrite. The sequence is that of Periplasmic nitrate reductase from Pseudomonas aeruginosa (strain UCBPP-PA14).